The following is a 98-amino-acid chain: Citrate lyase acyl carrier protein (98 aa).

Ser14 is modified (O-(phosphoribosyl dephospho-coenzyme A)serine).

This sequence belongs to the CitD family. Oligomer with a subunit composition of (alpha,beta,gamma)6.

The protein resides in the cytoplasm. Its function is as follows. Covalent carrier of the coenzyme of citrate lyase. The sequence is that of Citrate lyase acyl carrier protein from Albidiferax ferrireducens (strain ATCC BAA-621 / DSM 15236 / T118) (Rhodoferax ferrireducens).